A 354-amino-acid polypeptide reads, in one-letter code: Fructose-bisphosphate aldolase (354 aa).

Residue Ser-61 coordinates D-glyceraldehyde 3-phosphate. Asp-104 (proton donor) is an active-site residue. Residues His-105, Asp-139, Glu-169, and His-221 each contribute to the Zn(2+) site. Gly-222 is a dihydroxyacetone phosphate binding site. His-260 provides a ligand contact to Zn(2+). Dihydroxyacetone phosphate is bound by residues 261-263 (GGS) and 282-285 (NIDT).

It belongs to the class II fructose-bisphosphate aldolase family. Homodimer. The cofactor is Zn(2+).

It carries out the reaction beta-D-fructose 1,6-bisphosphate = D-glyceraldehyde 3-phosphate + dihydroxyacetone phosphate. The protein operates within carbohydrate degradation; glycolysis; D-glyceraldehyde 3-phosphate and glycerone phosphate from D-glucose: step 4/4. In terms of biological role, catalyzes the aldol condensation of dihydroxyacetone phosphate (DHAP or glycerone-phosphate) with glyceraldehyde 3-phosphate (G3P) to form fructose 1,6-bisphosphate (FBP) in gluconeogenesis and the reverse reaction in glycolysis. This Campylobacter jejuni subsp. jejuni serotype O:2 (strain ATCC 700819 / NCTC 11168) protein is Fructose-bisphosphate aldolase (fba).